Here is a 629-residue protein sequence, read N- to C-terminus: RNA polymerase sigma factor RpoD (629 aa).

The segment at 183–228 (HNGLDEDFSDEDDEEESSNADVEDNEDEEDNESESTSDSSDSDNSI) is disordered. A compositionally biased stretch (acidic residues) spans 187–228 (DEDFSDEDDEEESSNADVEDNEDEEDNESESTSDSSDSDNSI). The interval 395-465 (MVEANLRLVI…TRSIADQART (71 aa)) is sigma-70 factor domain-2. The Interaction with polymerase core subunit RpoC signature appears at 419–422 (DLIQ). The sigma-70 factor domain-3 stretch occupies residues 474 to 550 (ETINKLNRIS…DSTLELPLDS (77 aa)). The interval 563 to 616 (VLEGLTPREAKVLRMRFGIDMNTDHTLEEVGKQFDVTRERIRQIEAKALRKLRH) is sigma-70 factor domain-4. Positions 589–608 (LEEVGKQFDVTRERIRQIEA) form a DNA-binding region, H-T-H motif.

This sequence belongs to the sigma-70 factor family. RpoD/SigA subfamily. In terms of assembly, interacts transiently with the RNA polymerase catalytic core.

It localises to the cytoplasm. Sigma factors are initiation factors that promote the attachment of RNA polymerase to specific initiation sites and are then released. This sigma factor is the primary sigma factor during exponential growth. The chain is RNA polymerase sigma factor RpoD from Haemophilus influenzae (strain ATCC 51907 / DSM 11121 / KW20 / Rd).